A 240-amino-acid chain; its full sequence is Large ribosomal subunit protein uL2 (240 aa).

The span at 1–12 (MGRRIQGQRRGR) shows a compositional bias: basic residues. Disordered stretches follow at residues 1 to 21 (MGRR…RAPS) and 198 to 240 (VDHP…GSNK). Over residues 221–231 (PPGRKVGDIAS) the composition is skewed to basic and acidic residues.

The protein belongs to the universal ribosomal protein uL2 family. Part of the 50S ribosomal subunit. Forms a bridge to the 30S subunit in the 70S ribosome.

One of the primary rRNA binding proteins. Required for association of the 30S and 50S subunits to form the 70S ribosome, for tRNA binding and peptide bond formation. It has been suggested to have peptidyltransferase activity; this is somewhat controversial. Makes several contacts with the 16S rRNA in the 70S ribosome. The polypeptide is Large ribosomal subunit protein uL2 (Halorubrum lacusprofundi (strain ATCC 49239 / DSM 5036 / JCM 8891 / ACAM 34)).